Consider the following 107-residue polypeptide: uncharacterized protein (107 aa).

This is an uncharacterized protein from Acidianus convivator (ABV).